A 357-amino-acid polypeptide reads, in one-letter code: Fructose-bisphosphate aldolase (357 aa).

The substrate site is built by Arg-49 and Lys-140. Catalysis depends on Glu-183, which acts as the Proton acceptor. The active-site Schiff-base intermediate with dihydroxyacetone-P is the Lys-225.

This sequence belongs to the class I fructose-bisphosphate aldolase family.

The catalysed reaction is beta-D-fructose 1,6-bisphosphate = D-glyceraldehyde 3-phosphate + dihydroxyacetone phosphate. Its pathway is carbohydrate degradation; glycolysis; D-glyceraldehyde 3-phosphate and glycerone phosphate from D-glucose: step 4/4. This Dictyostelium discoideum (Social amoeba) protein is Fructose-bisphosphate aldolase (fba).